The following is a 655-amino-acid chain: MAAAAAASHLNLDALREVLECPICMESFTEEQLRPKLLHCGHTICRQCLEKLLASSINGVRCPFCSKITRITSLTQLTDNLTVLKIIDTAGLSEAVGLLMCRGCGRRLPRQFCRSCGVVLCEPCREADHQPPGHCTLPVKEAAEERRRDFGEKLTRLRELTGELQRRKAALEGVSRDLQARYKAVLQEYGHEERRIQEELARSRKFFTGSLAEVEKSNSQVVEEQSYLLNIAEVQAVSRCDYFLAKIKQADVALLEETADEEEPELTASLPRELTLQDVELLKVGHVGPLQIGQAVKKPRTVNMEDSWAGEEGAASSASASVTFREMDMSPEEVAPSPRASPAKQRSSEAASGIQQCLFLKKMGAKGSTPGMFNLPVSLYVTSQSEVLVADRGNYRIQVFNRKGFLKEIRRSPSGIDSFVLSFLGADLPNLTPLSVAMNCHGLIGVTDSYDNSLKVYTMDGHCVACHRSQLSKPWGITALPSGQFVVTDVEGGKLWCFTVDRGAGVVKYSCLCSAVRPKFVTCDAEGTVYFTQGLGLNVENRQNEHHLEGGFSIGSVGPDGQLGRQISHFFSENEDFRCIAGMCVDARGDLIVADSSRKEILHFPKGGGYSVLIREGLTCPVGIALTPKGQLLVLDCWDHCVKIYSYHLRRYSTP.

The RING-type zinc finger occupies 21–66 (CPICMESFTEEQLRPKLLHCGHTICRQCLEKLLASSINGVRCPFCS). A Phosphoserine; by CHEK2 modification is found at Ser-56. The B box-type; atypical zinc finger occupies 96–139 (VGLLMCRGCGRRLPRQFCRSCGVVLCEPCREADHQPPGHCTLPV). Zn(2+)-binding residues include Cys-101, Cys-104, Cys-124, and His-129. The stretch at 139 to 198 (VKEAAEERRRDFGEKLTRLRELTGELQRRKAALEGVSRDLQARYKAVLQEYGHEERRIQE) forms a coiled coil. The tract at residues 327–347 (MDMSPEEVAPSPRASPAKQRS) is disordered. 3 positions are modified to phosphoserine: Ser-330, Ser-337, and Ser-341. NHL repeat units follow at residues 360–403 (LKKM…FNRK), 417–460 (DSFV…YTMD), 461–501 (GHCV…FTVD), 564–607 (GRQI…FPKG), and 608–648 (GGYS…YSYH).

This sequence belongs to the TRIM/RBCC family. As to quaternary structure, it self-associates. Interacts with DTNBP1. Interacts with PIAS4/PIASY upon treatment with UVB and TNF-alpha. Interacts with AMBRA1; promoting activation of ULK1 through unanchored 'Lys-63'-linked polyubiquitin chains. Interacts with TICAM1 and TAX1BP1; these interactions target TICAM1 to TAX1BP1-mediated selective autophagic degradation. In terms of processing, ubiquitinated. Post-translationally, phosphorylation at Ser-56 by CHEK2 under oxidative stress, activates the E3 ligase activity and promotes ATG7 ubiquitination leading to positive regulation of the autophagosme assembly. Ubiquitous. High expression in brain.

It localises to the cytoplasm. It carries out the reaction S-ubiquitinyl-[E2 ubiquitin-conjugating enzyme]-L-cysteine + [acceptor protein]-L-lysine = [E2 ubiquitin-conjugating enzyme]-L-cysteine + N(6)-ubiquitinyl-[acceptor protein]-L-lysine.. Its pathway is protein modification; protein ubiquitination. Its function is as follows. E3 ubiquitin ligase that plays a role in various biological processes including neural stem cell differentiation, innate immunity, inflammatory resonse and autophagy. Plays a role in virus-triggered induction of IFN-beta and TNF-alpha by mediating the ubiquitination of STING1. Mechanistically, targets STING1 for 'Lys-63'-linked ubiquitination which promotes the interaction of STING1 with TBK1. Regulates bacterial clearance and promotes autophagy in Mycobacterium tuberculosis-infected macrophages. Negatively regulates TLR3/4-mediated innate immune and inflammatory response by triggering the autophagic degradation of TICAM1 in an E3 activity-independent manner. Plays an essential role in oxidative stress induced cell death by inducing loss of transmembrane potential and enhancing mitochondrial reactive oxygen species (ROS) production during oxidative stress conditions. Ubiquitinates XIAP and targets it for proteasomal degradation. Ubiquitinates DTNBP1 (dysbindin) and promotes its degradation. May ubiquitinate BBS2. Ubiquitinates PIAS4/PIASY and promotes its degradation in keratinocytes treated with UVB and TNF-alpha. Also acts as a regulator of autophagy by mediating formation of unanchored 'Lys-63'-linked polyubiquitin chains that activate ULK1: interaction with AMBRA1 is required for ULK1 activation. Positively regulates dendritic branching by promoting ubiquitination and subsequent degradation of the epigenetic factor CDYL. Under metabolic stress and phosphorylation by CHK2, mediates 'Lys-63'-linked ubiquitination of ATG7 at 'Lys-41' to initiate autophagy. In Mus musculus (Mouse), this protein is E3 ubiquitin-protein ligase TRIM32.